Consider the following 450-residue polypeptide: UDP-N-acetylmuramoylalanine--D-glutamate ligase (450 aa).

119–125 (GSNGKTT) is an ATP binding site.

This sequence belongs to the MurCDEF family.

It localises to the cytoplasm. The enzyme catalyses UDP-N-acetyl-alpha-D-muramoyl-L-alanine + D-glutamate + ATP = UDP-N-acetyl-alpha-D-muramoyl-L-alanyl-D-glutamate + ADP + phosphate + H(+). It functions in the pathway cell wall biogenesis; peptidoglycan biosynthesis. Its function is as follows. Cell wall formation. Catalyzes the addition of glutamate to the nucleotide precursor UDP-N-acetylmuramoyl-L-alanine (UMA). In Streptococcus gordonii (strain Challis / ATCC 35105 / BCRC 15272 / CH1 / DL1 / V288), this protein is UDP-N-acetylmuramoylalanine--D-glutamate ligase.